The chain runs to 90 residues: Acylphosphatase (90 aa).

The Acylphosphatase-like domain maps to 5–90 (CVKASVKGIV…WRHIDGFEIK (86 aa)). Active-site residues include Arg20 and Asn38.

The protein belongs to the acylphosphatase family.

It carries out the reaction an acyl phosphate + H2O = a carboxylate + phosphate + H(+). The polypeptide is Acylphosphatase (acyP) (Photobacterium profundum (strain SS9)).